Consider the following 243-residue polypeptide: Zinc import ATP-binding protein ZnuC (243 aa).

Residues 8–225 enclose the ABC transporter domain; it reads LNLSNVSYYI…SEFQKLFGHH (218 aa). 40 to 47 contributes to the ATP binding site; that stretch reads GPNGAGKS.

This sequence belongs to the ABC transporter superfamily. Zinc importer (TC 3.A.1.15.5) family. As to quaternary structure, the complex is composed of two ATP-binding proteins (ZnuC), two transmembrane proteins (ZnuB) and a solute-binding protein (ZnuA).

The protein localises to the cell inner membrane. It catalyses the reaction Zn(2+)(out) + ATP(in) + H2O(in) = Zn(2+)(in) + ADP(in) + phosphate(in) + H(+)(in). Its function is as follows. Part of the ABC transporter complex ZnuABC involved in zinc import. Responsible for energy coupling to the transport system. The polypeptide is Zinc import ATP-binding protein ZnuC (Psychrobacter cryohalolentis (strain ATCC BAA-1226 / DSM 17306 / VKM B-2378 / K5)).